A 246-amino-acid chain; its full sequence is Probable transcriptional regulatory protein GK2594 (246 aa).

This sequence belongs to the TACO1 family.

It localises to the cytoplasm. This Geobacillus kaustophilus (strain HTA426) protein is Probable transcriptional regulatory protein GK2594.